The sequence spans 503 residues: Maturase K (503 aa).

This sequence belongs to the intron maturase 2 family. MatK subfamily.

Its subcellular location is the plastid. It is found in the chloroplast. Usually encoded in the trnK tRNA gene intron. Probably assists in splicing its own and other chloroplast group II introns. The chain is Maturase K from Callistemon polandii (Gold-tipped bottlebrush).